Consider the following 309-residue polypeptide: Homoserine kinase (309 aa).

Residue 85–95 (PYGLGLGSSGS) participates in ATP binding.

This sequence belongs to the GHMP kinase family. Homoserine kinase subfamily.

It is found in the cytoplasm. It catalyses the reaction L-homoserine + ATP = O-phospho-L-homoserine + ADP + H(+). It functions in the pathway amino-acid biosynthesis; L-threonine biosynthesis; L-threonine from L-aspartate: step 4/5. Functionally, catalyzes the ATP-dependent phosphorylation of L-homoserine to L-homoserine phosphate. This chain is Homoserine kinase, found in Thermoplasma volcanium (strain ATCC 51530 / DSM 4299 / JCM 9571 / NBRC 15438 / GSS1).